We begin with the raw amino-acid sequence, 273 residues long: Large ribosomal subunit protein uL29m (273 aa).

Basic and acidic residues predominate over residues 247 to 258; that stretch reads PLRHDRWEKGQE. The segment at 247-273 is disordered; it reads PLRHDRWEKGQEENSGGETEDGNAPSN.

The protein belongs to the universal ribosomal protein uL29 family. As to quaternary structure, component of the mitochondrial large ribosomal subunit. Mature mitochondrial ribosomes consist of a small (37S) and a large (54S) subunit. The 37S subunit contains at least 33 different proteins and 1 molecule of RNA (15S). The 54S subunit contains at least 45 different proteins and 1 molecule of RNA (21S).

Its subcellular location is the mitochondrion. This is Large ribosomal subunit protein uL29m (mrpl4) from Aspergillus niger (strain ATCC MYA-4892 / CBS 513.88 / FGSC A1513).